A 340-amino-acid chain; its full sequence is Arginase 1, mitochondrial (340 aa).

The N-terminal 24 residues, 1–24 (MGGVAAGTRWIHHVRRLSAAKVST), are a transit peptide targeting the mitochondrion. The Mn(2+) site is built by His-159, Asp-183, His-185, and Asp-187. Residues 185–189 (HPDIY) and 193–195 (EGN) each bind substrate. Residues Asp-268 and Asp-270 each contribute to the Mn(2+) site. Glu-311 provides a ligand contact to substrate.

It belongs to the arginase family. It depends on Mn(2+) as a cofactor.

It is found in the mitochondrion. It carries out the reaction L-arginine + H2O = urea + L-ornithine. It participates in nitrogen metabolism; urea cycle; L-ornithine and urea from L-arginine: step 1/1. In terms of biological role, catalyzes the hydrolysis of L-arginine to urea and L-ornithine. The latter can be utilized in the urea cycle or as a precursor for the synthesis of both polyamines and proline. This chain is Arginase 1, mitochondrial, found in Oryza sativa subsp. indica (Rice).